We begin with the raw amino-acid sequence, 397 residues long: MPRPGQPRPSSGPPRLGPWERPTELCLETNDERSQPPPGRRTRRPDPKDPGHHGPESITFISGSAEPANEPPTCCLLWRPWGWDWCRAAFCFRRCRDCLQRCGACVRSCSPCLSAGDPIEGSSEAAWAKEHNGVPPSPDRAPPSRRDGQKLKTSMGSSFSYPDVKLKGIPVYPYRHATSPVPDADSCCKEPLADPPPTRHSLPSTFTSSPRGSEEYYSFHESDLDLPEMGSGSMSSREIDVLIFKKLTELFSVHQIDELAKCTSDTVFLEKTSKISDLISSITQDYHLDEQDAEGRLVRGIIRISTRKSRSRPQTSEGRSARSTAPAAAPDSGHETMVGSGLSQDELTVQISQETTADAIARKLRPYGAPGYPASQDSSFQGTDTDSSGAPLLQVYC.

A compositionally biased stretch (pro residues) spans 1–16 (MPRPGQPRPSSGPPRL). Disordered stretches follow at residues 1-67 (MPRP…SAEP), 124-158 (EAAW…MGSS), and 191-214 (PLAD…RGSE). Positions 44–55 (RPDPKDPGHHGP) are enriched in basic and acidic residues. Polar residues predominate over residues 201-211 (SLPSTFTSSPR). Phosphoserine is present on Ser-218. Disordered stretches follow at residues 304–339 (ISTR…TMVG) and 361–392 (ARKL…GAPL). Over residues 321–330 (ARSTAPAAAP) the composition is skewed to low complexity. A compositionally biased stretch (polar residues) spans 375 to 388 (SQDSSFQGTDTDSS).

It is found in the cytoplasm. The protein localises to the cell junction. Functionally, plays a role in the regulation of the epidermis formation during early development. Required both as an inhibitor of basal cell proliferation and a promoter of differentiation of basal progenitor cell progeny. The sequence is that of Keratinocyte differentiation factor 1 (Kdf1) from Rattus norvegicus (Rat).